The chain runs to 177 residues: Disulfide bond formation protein B (177 aa).

At 1–14 the chain is on the cytoplasmic side; that stretch reads MMVWNWIDRTPRRV. A helical transmembrane segment spans residues 15–31; sequence LALISLACVALLACGLY. The Periplasmic segment spans residues 32-49; it reads LQHVVGLVPCPMCIVQRY. A disulfide bond links cysteine 41 and cysteine 44. A helical membrane pass occupies residues 50 to 64; it reads ALIGLALLTGLASAR. The Cytoplasmic portion of the chain corresponds to 65–70; sequence SAKGWW. Residues 71–89 form a helical membrane-spanning segment; it reads LTLSALAALTAGFGATVAA. The Periplasmic segment spans residues 90 to 145; that stretch reads RQSWLQWYPPQSVSCGRDFYGMIESFPLSRAIPMILRGSGDCAAVDWSLLGGSIAN. Cysteine 104 and cysteine 131 are oxidised to a cystine. Residues 146–164 form a helical membrane-spanning segment; that stretch reads WSFLCFALLGLLLLALLAR. Over 165–177 the chain is Cytoplasmic; the sequence is GVRGARQRAPAPV.

It belongs to the DsbB family.

It is found in the cell inner membrane. Its function is as follows. Required for disulfide bond formation in some periplasmic proteins. Acts by oxidizing the DsbA protein. The protein is Disulfide bond formation protein B of Verminephrobacter eiseniae (strain EF01-2).